The primary structure comprises 491 residues: Pyruvate carboxylase subunit A (491 aa).

The Biotin carboxylation domain occupies 1 to 445; that stretch reads MFSKILVANR…HTHFVDEYRR (445 aa). Positions 116, 200, and 235 each coordinate ATP. In terms of domain architecture, ATP-grasp spans 120–316; that stretch reads KKLMKKAGVP…LVKEQIRVAS (197 aa). The active site involves R291.

In terms of assembly, heterooctamer of four A and four B subunits. Requires Mg(2+) as cofactor. Mn(2+) is required as a cofactor. It depends on Co(2+) as a cofactor.

It carries out the reaction hydrogencarbonate + pyruvate + ATP = oxaloacetate + ADP + phosphate + H(+). It functions in the pathway carbohydrate biosynthesis; gluconeogenesis. Its activity is regulated as follows. Inhibited by ADP and alpha-ketoglutarate. Its function is as follows. Pyruvate carboxylase catalyzes a 2-step reaction, involving the ATP-dependent carboxylation of the covalently attached biotin in the first step and the transfer of the carboxyl group to pyruvate in the second. This chain is Pyruvate carboxylase subunit A (pycA), found in Methanothermobacter thermautotrophicus (strain ATCC 29096 / DSM 1053 / JCM 10044 / NBRC 100330 / Delta H) (Methanobacterium thermoautotrophicum).